A 535-amino-acid chain; its full sequence is Proto-oncogene tyrosine-protein kinase Src (535 aa).

The disordered stretch occupies residues 1 to 56; sequence MGSNKSKPKDASQRRRSLEPSENVHGAGGAFPASQTPSKPASADGHRGPSAAFVPP. G2 carries N-myristoyl glycine lipidation. The segment covering 7–19 has biased composition (basic and acidic residues); it reads KPKDASQRRRSLE. Phosphoserine is present on residues S17, S21, and S74. An SH3 domain is found at 83–144; sequence GGVTTFVALY…PSNYVAPSDS (62 aa). An SH2 domain is found at 150-247; the sequence is WYFGKITRRE…GLCHRLTTVC (98 aa). Position 186 is a phosphotyrosine (Y186). Positions 269-522 constitute a Protein kinase domain; sequence LRLEVKLGQG…YLQAFLEDYF (254 aa). ATP-binding positions include 275-283 and K297; that span reads LGQGCFGEV. D388 serves as the catalytic Proton acceptor. Y418 is subject to Phosphotyrosine; by autocatalysis. Phosphotyrosine; by FAK2 is present on Y418. Y529 is subject to Phosphotyrosine; by CSK.

The protein belongs to the protein kinase superfamily. Tyr protein kinase family. SRC subfamily. Part of a complex comprised of PTPRA, BCAR1, BCAR3 (via SH2 domain) and SRC; the formation of the complex is dependent on integrin mediated-tyrosine phosphorylation of PTPRA. Interacts with CDCP1, TGFB1I1 and TOM1L2. Interacts with DDEF1/ASAP1 via its SH3 domain. Interacts with CCPG1. Interacts with the cytoplasmic domain of MUC1, phosphorylates it and increases binding of MUC1 with beta-catenin. Interacts with RALGPS1 via its SH3 domain. Interacts with CAV2 (tyrosine phosphorylated form). Interacts (via the SH3 domain and the protein kinase domain) with ARRB1; the interaction is independent of the phosphorylation state of SRC C-terminus. Interacts with FCAMR and PXN. Interacts with ARRB2. Interacts with ARRB1. Interacts with SRCIN1. Interacts with NDFIP2 and more weakly with NDFIP1. Interacts with PIK3CA and/or PIK3C2B, PTK2/FAK1, ESR1 (dimethylated on arginine) and FAK. Interacts (via SH2 and SH3 domain) with TNK2. Interacts (via protein kinase domain) with the tyrosine phosphorylated form of RUNX3 (via runt domain). Interacts with TRAF3 (via RING-type zinc finger domain). Interacts with RIGI, MAVS and TBK1. Interacts (via SH2 domain) with RACK1; the interaction is enhanced by tyrosine phosphorylation of RACK1 and inhibits SRC activity. Interacts (via SH2 domain) with the 'Tyr-402' phosphorylated form of PTK2B/PYK2. Interacts (via SH2 domain) with FLT3 (tyrosine phosphorylated). Identified in a complex containing FGFR4, NCAM1, CDH2, PLCG1, FRS2, SRC, SHC1, GAP43 and CTTN. Interacts with EPHB1; activates the MAPK/ERK cascade to regulate cell migration. Interacts with ERBB2 and STAT1. Interacts with PDGFRA (tyrosine phosphorylated). Interacts with CSF1R. Interacts (via SH2 domain) with the 'Tyr-9' phosphorylated form of PDPK1. Interacts with DDR2. Interacts with AMOTL2; this interaction regulates the translocation of phosphorylated SRC to peripheral cell-matrix adhesion sites. Interacts with DDR1 and DAB2. Interacts with TRAP1. Interacts with CBLC; the interaction is enhanced when SRC is phosphorylated at 'Tyr-424'. Interacts with ARHGEF5. Interacts (via cytoplasmic domain) with CEACAM1 (via SH2 domain); this interaction is regulated by trans-homophilic cell adhesion. Interacts with MPP2. Interacts with PRR7. Interacts (via kinase domain and to a lesser extent the SH2 domain) directly with PDLIM4; this interaction results in PTPN13-mediated dephosphorylation of this protein leading to its inactivation. Interacts with P85 (PIK3R1 or PIK3R2). Interacts with HNRNPA2B1. Interacts with IL6ST/gp130. Interacts (via SH3 domain) with PELP1 in the presence of 17-beta-estradiol. Interacts with AMBRA1. In terms of processing, myristoylated at Gly-2, and this is essential for targeting to membranes. Dephosphorylated at Tyr-529 by PTPRJ. Phosphorylated on Tyr-529 by c-Src kinase (CSK). The phosphorylated form is termed pp60c-src. Dephosphorylated by PTPRJ at Tyr-418. Normally maintained in an inactive conformation with the SH2 domain engaged with Tyr-529, the SH3 domain engaged with the SH2-kinase linker, and Tyr-418 dephosphorylated. Dephosphorylation of Tyr-529 as a result of protein tyrosine phosphatase (PTP) action disrupts the intramolecular interaction between the SH2 domain and Tyr-529, Tyr-418 can then become autophosphorylated, resulting in SRC activation. Phosphorylation of Tyr-529 by CSK allows this interaction to reform, resulting in SRC inactivation. CDK5-mediated phosphorylation at Ser-74 targets SRC to ubiquitin-dependent degradation and thus leads to cytoskeletal reorganization. Phosphorylated by PTK2/FAK1; this enhances kinase activity. Phosphorylated by PTK2B/PYK2; this enhances kinase activity. Upon activation of IL6ST by IL6, Tyr-418 is phosphorylated and Tyr-529 dephosphorylated. Post-translationally, displays reduced levels of autophosphorylation at Tyr-418 compared to isoform 2. In terms of processing, displays enhanced levels of autophosphorylation at Tyr-418 compared to isoform 1. S-nitrosylation is important for activation of its kinase activity. Post-translationally, ubiquitinated in response to CDK5-mediated phosphorylation. Ubiquitination mediated by CBLC requires SRC autophosphorylation at Tyr-418 and may lead to lysosomal degradation.

The protein resides in the cell membrane. The protein localises to the mitochondrion inner membrane. It localises to the nucleus. It is found in the cytoplasm. Its subcellular location is the cytoskeleton. The protein resides in the perinuclear region. The protein localises to the cell junction. It localises to the focal adhesion. The enzyme catalyses L-tyrosyl-[protein] + ATP = O-phospho-L-tyrosyl-[protein] + ADP + H(+). Its activity is regulated as follows. Phosphorylation by CSK at Tyr-529 inhibits kinase activity. Inhibitory phosphorylation at Tyr-529 is enhanced by heme. Further phosphorylation by CDK1 partially reactivates CSK-inactivated SRC and facilitates complete reactivation by protein tyrosine phosphatase PTPRC. Integrin engagement stimulates kinase activity. Phosphorylation by PTK2/FAK1 enhances kinase activity. Butein and pseudosubstrate-based peptide inhibitors like CIYKYYF act as inhibitors. Phosphorylation at Tyr-418 increases kinase activity. Its function is as follows. Non-receptor protein tyrosine kinase which is activated following engagement of many different classes of cellular receptors including immune response receptors, integrins and other adhesion receptors, receptor protein tyrosine kinases, G protein-coupled receptors as well as cytokine receptors. Participates in signaling pathways that control a diverse spectrum of biological activities including gene transcription, immune response, cell adhesion, cell cycle progression, apoptosis, migration, and transformation. Due to functional redundancy between members of the SRC kinase family, identification of the specific role of each SRC kinase is very difficult. SRC appears to be one of the primary kinases activated following engagement of receptors and plays a role in the activation of other protein tyrosine kinase (PTK) families. Receptor clustering or dimerization leads to recruitment of SRC to the receptor complexes where it phosphorylates the tyrosine residues within the receptor cytoplasmic domains. Plays an important role in the regulation of cytoskeletal organization through phosphorylation of specific substrates such as AFAP1. Phosphorylation of AFAP1 allows the SRC SH2 domain to bind AFAP1 and to localize to actin filaments. Cytoskeletal reorganization is also controlled through the phosphorylation of cortactin (CTTN). When cells adhere via focal adhesions to the extracellular matrix, signals are transmitted by integrins into the cell resulting in tyrosine phosphorylation of a number of focal adhesion proteins, including PTK2/FAK1 and paxillin (PXN). In addition to phosphorylating focal adhesion proteins, SRC is also active at the sites of cell-cell contact adherens junctions and phosphorylates substrates such as beta-catenin (CTNNB1), delta-catenin (CTNND1), and plakoglobin (JUP). Another type of cell-cell junction, the gap junction, is also a target for SRC, which phosphorylates connexin-43 (GJA1). SRC is implicated in regulation of pre-mRNA-processing and phosphorylates RNA-binding proteins such as KHDRBS1. Phosphorylates PKP3 at 'Tyr-195' in response to reactive oxygen species, which may cause the release of PKP3 from desmosome cell junctions into the cytoplasm. Also plays a role in PDGF-mediated tyrosine phosphorylation of both STAT1 and STAT3, leading to increased DNA binding activity of these transcription factors. Involved in the RAS pathway through phosphorylation of RASA1 and RASGRF1. Plays a role in EGF-mediated calcium-activated chloride channel activation. Required for epidermal growth factor receptor (EGFR) internalization through phosphorylation of clathrin heavy chain (CLTC and CLTCL1) at 'Tyr-1477'. Involved in beta-arrestin (ARRB1 and ARRB2) desensitization through phosphorylation and activation of GRK2, leading to beta-arrestin phosphorylation and internalization. Has a critical role in the stimulation of the CDK20/MAPK3 mitogen-activated protein kinase cascade by epidermal growth factor. Might be involved not only in mediating the transduction of mitogenic signals at the level of the plasma membrane but also in controlling progression through the cell cycle via interaction with regulatory proteins in the nucleus. Plays an important role in osteoclastic bone resorption in conjunction with PTK2B/PYK2. Both the formation of a SRC-PTK2B/PYK2 complex and SRC kinase activity are necessary for this function. Recruited to activated integrins by PTK2B/PYK2, thereby phosphorylating CBL, which in turn induces the activation and recruitment of phosphatidylinositol 3-kinase to the cell membrane in a signaling pathway that is critical for osteoclast function. Promotes energy production in osteoclasts by activating mitochondrial cytochrome C oxidase. Phosphorylates DDR2 on tyrosine residues, thereby promoting its subsequent autophosphorylation. Phosphorylates RUNX3 and COX2 on tyrosine residues, TNK2 on 'Tyr-284' and CBL on 'Tyr-738'. Enhances RIGI-elicited antiviral signaling. Phosphorylates PDPK1 at 'Tyr-9', 'Tyr-373' and 'Tyr-376'. Phosphorylates BCAR1 at 'Tyr-226'. Phosphorylates CBLC at multiple tyrosine residues, phosphorylation at 'Tyr-341' activates CBLC E3 activity. Phosphorylates synaptic vesicle protein synaptophysin (SYP). Involved in anchorage-independent cell growth. Required for podosome formation. Mediates IL6 signaling by activating YAP1-NOTCH pathway to induce inflammation-induced epithelial regeneration. Phosphorylates OTUB1, promoting deubiquitination of RPTOR. Functionally, non-receptor protein tyrosine kinase which phosphorylates synaptophysin with high affinity. Non-receptor protein tyrosine kinase which shows higher basal kinase activity than isoform 1, possibly due to weakened intramolecular interactions which enhance autophosphorylation of Tyr-418 and subsequent activation. The SH3 domain shows reduced affinity with the linker sequence between the SH2 and kinase domains which may account for the increased basal activity. Displays altered substrate specificity compared to isoform 1, showing weak affinity for synaptophysin and for peptide substrates containing class I or class II SH3 domain-binding motifs. Plays a role in L1CAM-mediated neurite elongation, possibly by acting downstream of L1CAM to drive cytoskeletal rearrangements involved in neurite outgrowth. This chain is Proto-oncogene tyrosine-protein kinase Src, found in Mus musculus (Mouse).